Reading from the N-terminus, the 221-residue chain is Ribosomal RNA small subunit methyltransferase G (221 aa).

S-adenosyl-L-methionine-binding positions include Gly-89, Leu-94, 140 to 141 (VE), and Arg-154.

The protein belongs to the methyltransferase superfamily. RNA methyltransferase RsmG family.

The protein localises to the cytoplasm. The catalysed reaction is guanosine(527) in 16S rRNA + S-adenosyl-L-methionine = N(7)-methylguanosine(527) in 16S rRNA + S-adenosyl-L-homocysteine. In terms of biological role, specifically methylates the N7 position of guanine in position 527 of 16S rRNA. In Methylibium petroleiphilum (strain ATCC BAA-1232 / LMG 22953 / PM1), this protein is Ribosomal RNA small subunit methyltransferase G.